Consider the following 329-residue polypeptide: Alpha/beta hydrolase domain-containing protein 17C (329 aa).

Residues 53–79 are compositionally biased toward low complexity; sequence GASAPAPAQATAAAAAAQPAPQQPEEG. Residues 53–85 form a disordered region; that stretch reads GASAPAPAQATAAAAAAQPAPQQPEEGAGAGPG. Catalysis depends on charge relay system residues Ser211, Asp276, and His305.

Belongs to the AB hydrolase superfamily. ABHD17 family. In terms of processing, palmitoylated on cysteine residues located in a cysteine cluster at the N-terminus which promotes membrane localization. Palmitoylation is required for post-synaptic localization and for depalmitoylating activity towards DLG4/PSD95.

Its subcellular location is the recycling endosome membrane. The protein resides in the cell projection. It is found in the dendritic spine. It localises to the postsynaptic density membrane. The enzyme catalyses S-hexadecanoyl-L-cysteinyl-[protein] + H2O = L-cysteinyl-[protein] + hexadecanoate + H(+). With respect to regulation, inhibited by palmostatin-B. Hydrolyzes fatty acids from S-acylated cysteine residues in proteins. Has depalmitoylating activity towards NRAS and DLG4/PSD95. The sequence is that of Alpha/beta hydrolase domain-containing protein 17C from Homo sapiens (Human).